Consider the following 720-residue polypeptide: Inactive serine protease PAMR1 (720 aa).

A signal peptide spans 1-21 (MELGCWTQLGLTFLQLLLISS). Disulfide bonds link C128-C150, C177-C199, C239-C250, C244-C260, C262-C271, C280-C329, C315-C342, C414-C442, and C489-C505. Residues 128–236 (CGQVLRAPKG…DGFHAIYEEI (109 aa)) form the CUB domain. In terms of domain architecture, EGF-like spans 235–272 (EITACSSSPCFHDGTCVLDKAGSYKCACLAGYTGQRCE). 2 consecutive Sushi domains span residues 278-344 (RNCS…ICIK) and 387-444 (APTK…SCIP). One can recognise a Peptidase S1 domain in the interval 445–720 (ICGKIENITA…FKDWIERNMK (276 aa)). Residue N614 is glycosylated (N-linked (GlcNAc...) asparagine). 2 cysteine pairs are disulfide-bonded: C630–C649 and C661–C697.

It belongs to the peptidase S1 family.

The protein localises to the secreted. Its function is as follows. May play a role in regeneration of skeletal muscle. This is Inactive serine protease PAMR1 (PAMR1) from Homo sapiens (Human).